A 567-amino-acid chain; its full sequence is Dihydroxy-acid dehydratase 3 (567 aa).

Cys57 is a binding site for [2Fe-2S] cluster. Residue Asp89 participates in Mg(2+) binding. Cys130 is a [2Fe-2S] cluster binding site. Residues Asp131 and Lys132 each coordinate Mg(2+). N6-carboxylysine is present on Lys132. Cys202 contacts [2Fe-2S] cluster. Glu454 contributes to the Mg(2+) binding site. Ser480 functions as the Proton acceptor in the catalytic mechanism.

This sequence belongs to the IlvD/Edd family. Homodimer. [2Fe-2S] cluster serves as cofactor. Requires Mg(2+) as cofactor.

It carries out the reaction (2R)-2,3-dihydroxy-3-methylbutanoate = 3-methyl-2-oxobutanoate + H2O. The enzyme catalyses (2R,3R)-2,3-dihydroxy-3-methylpentanoate = (S)-3-methyl-2-oxopentanoate + H2O. The protein operates within amino-acid biosynthesis; L-isoleucine biosynthesis; L-isoleucine from 2-oxobutanoate: step 3/4. It participates in amino-acid biosynthesis; L-valine biosynthesis; L-valine from pyruvate: step 3/4. Functionally, functions in the biosynthesis of branched-chain amino acids. Catalyzes the dehydration of (2R,3R)-2,3-dihydroxy-3-methylpentanoate (2,3-dihydroxy-3-methylvalerate) into 2-oxo-3-methylpentanoate (2-oxo-3-methylvalerate) and of (2R)-2,3-dihydroxy-3-methylbutanoate (2,3-dihydroxyisovalerate) into 2-oxo-3-methylbutanoate (2-oxoisovalerate), the penultimate precursor to L-isoleucine and L-valine, respectively. This is Dihydroxy-acid dehydratase 3 from Aromatoleum aromaticum (strain DSM 19018 / LMG 30748 / EbN1) (Azoarcus sp. (strain EbN1)).